A 323-amino-acid chain; its full sequence is Dof zinc finger protein DOF3.6 (323 aa).

A Dof-type zinc finger spans residues 76-130 (LNCPRCDSTNTKFCYFNNYSLTQPRHFCKTCRRYWTRGGSLRNVPVGGGFRRNKR). Residues cysteine 78, cysteine 81, cysteine 103, and cysteine 106 each contribute to the Zn(2+) site. 2 disordered regions span residues 121 to 160 (VGGGFRRNKRSKSRSKSTVVVSTDNTTSTSSLTSRPSYSN) and 304 to 323 (GGNSSWTGFTSNNSTGHLSF). Over residues 126–135 (RRNKRSKSRS) the composition is skewed to basic residues. Residues 136-159 (KSTVVVSTDNTTSTSSLTSRPSYS) are compositionally biased toward low complexity.

In terms of assembly, interacts with OBF4. As to expression, predominantly expressed in roots.

It is found in the nucleus. Transcription factor that binds specifically to a 5'-AA[AG]G-3' consensus core sequence. Enhances the DNA binding of OBF transcription factors to OCS elements. The polypeptide is Dof zinc finger protein DOF3.6 (DOF3.6) (Arabidopsis thaliana (Mouse-ear cress)).